The primary structure comprises 98 residues: NADH-ubiquinone oxidoreductase chain 4L (98 aa).

3 helical membrane-spanning segments follow: residues 1–21 (MPII…GMLF), 29–49 (SLLC…LMAL), and 58–78 (IVPI…LALL).

Belongs to the complex I subunit 4L family. Core subunit of respiratory chain NADH dehydrogenase (Complex I) which is composed of 45 different subunits.

The protein localises to the mitochondrion inner membrane. It carries out the reaction a ubiquinone + NADH + 5 H(+)(in) = a ubiquinol + NAD(+) + 4 H(+)(out). Core subunit of the mitochondrial membrane respiratory chain NADH dehydrogenase (Complex I) which catalyzes electron transfer from NADH through the respiratory chain, using ubiquinone as an electron acceptor. Part of the enzyme membrane arm which is embedded in the lipid bilayer and involved in proton translocation. This is NADH-ubiquinone oxidoreductase chain 4L (MT-ND4L) from Trachypithecus obscurus (Dusky leaf-monkey).